The primary structure comprises 603 residues: MFRAQQNAFDDAVAKATDENLTSENWEYILDVCDKVAAEESGAKDAVAAMIKRLAHRNANVQLYTLELANALAQNCGPKIHRELASRSFTDALLRLANDRNTHQQVKPKILERMQEWAQMFANNPDFGIMEQAYMKLKTQNPNLQPPSKPGKREITEADRQKEEEELQMALALSIREKPSAAPEPKAEPSTSASVPASQTQAATSQAVPPGTSAATVSRVRALFDFQPSEPGELQFRKGDIIAVLESVYKDWWKGSLRGQTGIFPLNYVEKLPDPTVEELQREAQMEAEVFGQIKNVEKLLTLLSTRSSELNVQDNEEITALYHSTLSIRPKLIELIGKYSQKKDEFTQLNEKFIKARRDYESLLEASMSHPAQPQYGRPGQTPYGYPGPAAPLGYPQGPPQSDPQRYFSPRPQDQTHMYPPTSHSPDPRGRTPPAGPSFPQHQQPPPDSYQPVHHRPESTYDNPQELGTSVYDSPVEHPSSSQRLPYPPSGAPVPPGVHQQFQHQQQEYPPSGYPPEDASKPPTAGFASQPPQQTLQQPPYPTAPVAHQPPPSHQPPPVPSTASKPTPYPSLTPGTPSGGEYQAYNPSQAGAANSNPNSYYR.

A VHS domain is found at 16–145; sequence ATDENLTSEN…KLKTQNPNLQ (130 aa). 2 disordered regions span residues 140–164 and 177–212; these read QNPN…QKEE and EKPS…PPGT. Residues 151–163 show a composition bias toward basic and acidic residues; the sequence is GKREITEADRQKE. In terms of domain architecture, UIM spans 162–181; that stretch reads KEEEELQMALALSIREKPSA. The segment covering 180–210 has biased composition (low complexity); the sequence is SAAPEPKAEPSTSASVPASQTQAATSQAVPP. The SH3 domain occupies 215–274; that stretch reads ATVSRVRALFDFQPSEPGELQFRKGDIIAVLESVYKDWWKGSLRGQTGIFPLNYVEKLPD. The tract at residues 371–603 is disordered; that stretch reads HPAQPQYGRP…ANSNPNSYYR (233 aa). Residues 374-397 are compositionally biased toward low complexity; the sequence is QPQYGRPGQTPYGYPGPAAPLGYP. Over residues 461–473 the composition is skewed to polar residues; the sequence is TYDNPQELGTSVY. Residues 487–497 are compositionally biased toward pro residues; the sequence is PYPPSGAPVPP. The segment covering 498 to 508 has biased composition (low complexity); it reads GVHQQFQHQQQ. The span at 540–561 shows a compositional bias: pro residues; sequence PPYPTAPVAHQPPPSHQPPPVP. Positions 586–603 are enriched in polar residues; it reads YNPSQAGAANSNPNSYYR.

It belongs to the STAM family. In terms of assembly, component of the ESCRT-0 complex composed of HSE1 and VPS27.

The protein resides in the endosome membrane. In terms of biological role, component of the ESCRT-0 complex which is the sorting receptor for ubiquitinated cargo proteins at the multivesicular body (MVB). This is Class E vacuolar protein-sorting machinery protein hse1 (hse1) from Neosartorya fischeri (strain ATCC 1020 / DSM 3700 / CBS 544.65 / FGSC A1164 / JCM 1740 / NRRL 181 / WB 181) (Aspergillus fischerianus).